Reading from the N-terminus, the 92-residue chain is Small ribosomal subunit protein uS19 (92 aa).

The protein belongs to the universal ribosomal protein uS19 family.

In terms of biological role, protein S19 forms a complex with S13 that binds strongly to the 16S ribosomal RNA. The polypeptide is Small ribosomal subunit protein uS19 (Macrococcus caseolyticus (strain JCSC5402) (Macrococcoides caseolyticum)).